The sequence spans 485 residues: uncharacterized protein (485 aa).

Residues 1–23 form the signal peptide; the sequence is MRRRVCTVVRAVVCLLSTSLLTT. Cys-24 carries N-palmitoyl cysteine lipidation. Cys-24 carries the S-diacylglycerol cysteine lipid modification. Over residues 308–327 the composition is skewed to low complexity; it reads SAASSPAQCPSSPSSSSSSS. The tract at residues 308–331 is disordered; sequence SAASSPAQCPSSPSSSSSSSTNAG.

It belongs to the TP013X lipoprotein family.

Its subcellular location is the cell membrane. This is an uncharacterized protein from Treponema pallidum (strain Nichols).